We begin with the raw amino-acid sequence, 455 residues long: MALWGGRFSQESSALFKLFNDSLPVDFRLIEQDIVGSIAWASAITQVGILTEQECKDLHHALNELLAETIDNPQLIIASGAEDIHSFVEQSLIAKVGDLGKKLHTGRSRNDQVATDLKLWCKKEGEQLLGLLANLRAALIELAERELDAVMPGYTHLQRAQPVVFGHWCLAYVEMFERDISRLQDALKRADTCPLGTGALAGTAYPMDRVKLAKSLGFASPTLNSLDTVSDRDHVIEICSDASISMMHLSRMAEDLIFFNSGEAGFIDLDDEVTSGSSLMPQKKNPDALELIRGKTGRVYGSLMGILTTMKALPLAYNKDMQEDKEGLFDVMDSWSICLEMAALVLSGLKVNREKTLSAAKQGYANSTELADYLVAKGMPFREAHHVVGEAVVSAIAKQTPLEDLTLEELQAFSAVIDADVYDCLTIESCLAKREALGGTSLPQVKSALAVKQAS.

This sequence belongs to the lyase 1 family. Argininosuccinate lyase subfamily.

The protein localises to the cytoplasm. The enzyme catalyses 2-(N(omega)-L-arginino)succinate = fumarate + L-arginine. It participates in amino-acid biosynthesis; L-arginine biosynthesis; L-arginine from L-ornithine and carbamoyl phosphate: step 3/3. The chain is Argininosuccinate lyase from Shewanella halifaxensis (strain HAW-EB4).